The sequence spans 199 residues: Holliday junction branch migration complex subunit RuvA (199 aa).

Residues Met-1–Gly-64 are domain I. Positions Thr-65–Met-143 are domain II. The segment at Thr-144 to Val-151 is flexible linker. Positions Thr-152–Leu-199 are domain III.

Belongs to the RuvA family. Homotetramer. Forms an RuvA(8)-RuvB(12)-Holliday junction (HJ) complex. HJ DNA is sandwiched between 2 RuvA tetramers; dsDNA enters through RuvA and exits via RuvB. An RuvB hexamer assembles on each DNA strand where it exits the tetramer. Each RuvB hexamer is contacted by two RuvA subunits (via domain III) on 2 adjacent RuvB subunits; this complex drives branch migration. In the full resolvosome a probable DNA-RuvA(4)-RuvB(12)-RuvC(2) complex forms which resolves the HJ.

The protein resides in the cytoplasm. The RuvA-RuvB-RuvC complex processes Holliday junction (HJ) DNA during genetic recombination and DNA repair, while the RuvA-RuvB complex plays an important role in the rescue of blocked DNA replication forks via replication fork reversal (RFR). RuvA specifically binds to HJ cruciform DNA, conferring on it an open structure. The RuvB hexamer acts as an ATP-dependent pump, pulling dsDNA into and through the RuvAB complex. HJ branch migration allows RuvC to scan DNA until it finds its consensus sequence, where it cleaves and resolves the cruciform DNA. This Ruminiclostridium cellulolyticum (strain ATCC 35319 / DSM 5812 / JCM 6584 / H10) (Clostridium cellulolyticum) protein is Holliday junction branch migration complex subunit RuvA.